We begin with the raw amino-acid sequence, 140 residues long: Small ribosomal subunit protein uS12 (140 aa).

A disordered region spans residues 1–28 (MPTINQLVRKSRKALEKKSTAPALQKGY). 3-methylthioaspartic acid is present on Asp102. The disordered stretch occupies residues 119–140 (GVDKRRQSRSKYGAKRPKEAKK). Residues 124 to 140 (RQSRSKYGAKRPKEAKK) show a composition bias toward basic residues.

It belongs to the universal ribosomal protein uS12 family. As to quaternary structure, part of the 30S ribosomal subunit. Contacts proteins S8 and S17. May interact with IF1 in the 30S initiation complex.

Its function is as follows. With S4 and S5 plays an important role in translational accuracy. Functionally, interacts with and stabilizes bases of the 16S rRNA that are involved in tRNA selection in the A site and with the mRNA backbone. Located at the interface of the 30S and 50S subunits, it traverses the body of the 30S subunit contacting proteins on the other side and probably holding the rRNA structure together. The combined cluster of proteins S8, S12 and S17 appears to hold together the shoulder and platform of the 30S subunit. The protein is Small ribosomal subunit protein uS12 of Clostridioides difficile (strain 630) (Peptoclostridium difficile).